Reading from the N-terminus, the 397-residue chain is Serpin B10 (397 aa).

Positions 74 to 77 (KKRK) match the Nuclear localization signal motif.

It belongs to the serpin family. Ov-serpin subfamily. Expressed in many tissues, including brain, heart, kidney, liver, lung, prostate, skin, spleen and stomach.

It is found in the nucleus. Its subcellular location is the cytoplasm. Its function is as follows. Protease inhibitor that may play a role in the regulation of protease activities during hematopoiesis and apoptosis induced by TNF. May regulate protease activities in the cytoplasm and in the nucleus. Inhibits plasmin. This chain is Serpin B10 (Serpinb10), found in Rattus norvegicus (Rat).